A 340-amino-acid polypeptide reads, in one-letter code: PI-PLC X domain-containing protein 2 (340 aa).

The PI-PLC X-box domain occupies 42–215 (HLHNVPLSNL…KYQVLIFYHC (174 aa)). Catalysis depends on residues H57 and H132.

In terms of tissue distribution, expressed at highest levels in brain, followed by stomach and small intestine. Detected at low levels in kidney, ey, thymus and slkeletal muscle.

The protein resides in the nucleus. The enzyme catalyses a 1,2-diacyl-sn-glycero-3-phospho-(1D-myo-inositol) + H2O = 1D-myo-inositol 1-phosphate + a 1,2-diacyl-sn-glycerol + H(+). In terms of biological role, catalyzes the hydrolysis of inositol from phosphatidylinositol (1,2-diacyl-sn-glycero-3-phospho-(1D-myo-inositol), PI). Could also hydrolyze various multi-phosphorylated derivatives of PI, such as phosphatidylinositol-4,5 bisphosphate (PIP2), releasing inositol-1,4,5-trisphosphate (IP3) and the protein kinase C activator diacylglycerol (DAG), therefore mediating cell signaling. This is PI-PLC X domain-containing protein 2 (Plcxd2) from Mus musculus (Mouse).